The sequence spans 77 residues: U8-lycotoxin-Ls1t (77 aa).

An N-terminal signal peptide occupies residues 1-20 (MKLIIFTGLVPFAIVSLIEA). Residues 21-26 (QAENEK) constitute a propeptide that is removed on maturation.

The protein belongs to the neurotoxin 19 (CSTX) family. 08 (U8-Lctx) subfamily. In terms of processing, contains 4 disulfide bonds. As to expression, expressed by the venom gland.

It is found in the secreted. The sequence is that of U8-lycotoxin-Ls1t from Lycosa singoriensis (Wolf spider).